The following is a 233-amino-acid chain: Glucosamine-6-phosphate deaminase (233 aa).

Catalysis depends on D62, which acts as the Proton acceptor; for enolization step. The active-site For ring-opening step is the N128. The Proton acceptor; for ring-opening step role is filled by H130. E135 (for ring-opening step) is an active-site residue.

The protein belongs to the glucosamine/galactosamine-6-phosphate isomerase family. NagB subfamily.

It carries out the reaction alpha-D-glucosamine 6-phosphate + H2O = beta-D-fructose 6-phosphate + NH4(+). It functions in the pathway amino-sugar metabolism; N-acetylneuraminate degradation; D-fructose 6-phosphate from N-acetylneuraminate: step 5/5. In terms of biological role, catalyzes the reversible isomerization-deamination of glucosamine 6-phosphate (GlcN6P) to form fructose 6-phosphate (Fru6P) and ammonium ion. The sequence is that of Glucosamine-6-phosphate deaminase from Leuconostoc citreum (strain KM20).